Reading from the N-terminus, the 195-residue chain is uncharacterized protein (195 aa).

The tract at residues 143 to 195 (NKLIETINTNRTNNTDNKSTKSKKQTETKKSLRTNKIVKQPINKSKKNIREEY) is disordered. The segment covering 148 to 159 (TINTNRTNNTDN) has biased composition (low complexity).

This is an uncharacterized protein from Acanthamoeba polyphaga (Amoeba).